Here is an 823-residue protein sequence, read N- to C-terminus: Bifunctional enzyme flvA (823 aa).

The pyridoxal 5'-phosphate-dependent lyase stretch occupies residues 56–535; that stretch reads TAKFEMALMP…QRLYDAKFYI (480 aa). Position 331 is an N6-(pyridoxal phosphate)lysine (Lys-331). The interval 573–823 is alpha-ketoglutarate-dependent oxygenase; that stretch reads DFDALQQVSH…TLPMNVPLWL (251 aa). Residues His-703 and Asp-705 each contribute to the Fe cation site.

The protein in the N-terminal section; belongs to the trans-sulfuration enzymes family. In the C-terminal section; belongs to the iron/ascorbate-dependent oxidoreductase family. It depends on pyridoxal 5'-phosphate as a cofactor. Fe(2+) is required as a cofactor.

The enzyme catalyses O-acetyl-L-homoserine + 3-methyl-2-oxobutanoate = (6S)-6-amino-3,3-dimethyl-2-oxoheptanedioate + acetate + H(+). It carries out the reaction (6S)-3,3-dimethylpiperidine-2,6-dicarboxylate + 2-oxoglutarate + AH2 + O2 + H(+) = (2S)-5,5-dimethylpiperidine-2-carboxylate + succinate + A + 2 CO2 + H2O. Its pathway is secondary metabolite biosynthesis; terpenoid biosynthesis. Its function is as follows. Bifunctional enzyme; part of the gene cluster that mediates the biosynthesis of flavunoidine, an alkaloidal terpenoid with a tetracyclic cage-like core connected to dimethylcadaverine via a C-N bond and acylated with 5,5-dimethyl-L-pipecolate. The tetracyclic core is synthesized by the terpene cyclase flvE and the cytochrome P450 monooxygenase flvD. The terpene cyclase flvE catalyzes the cyclization of farnesyl pyrophosphate (FPP) to form (1R,4R,5S)-(+)-acoradiene and the cytochrome P450 monooxygenase flvD is then responsible for oxidative conversion of (1R,4R,5S)-(+)-acoradiene into the tetracyclic cage present in the final product flavunoidine. In parallel, the N-methyltransferase flvH dimethylates L-lysine to give N,N-dimethyl-L-Lysin which is decarboxylated by flvG to afford dimethylcadaverine. The terpene cyclase-like protein flvF is the enzyme that attaches the dimethylcadaverine precusor at the C-7 of the tetracyclic cage to yield pre-flavunoidine. The cytochrome monooxygenase flvC hydroxylates the C-10 position of pre-flavunoidine whereas the NRPS flvI acylates the terpenoid core at the hydroxylated C-10 with dimethylpipecolate to yield final flavunoidine. The bifunctional enzyme flvA and the dehydrogenase flvB are responsible for the synthesis of the dimethylpipecolate precursor. The PLP-dependent lyase domain of flvA might use L-O-acetyl-homoserine and alpha-keto-isovalerate to form an intermediary ketone that can cyclize intramolecularly to yield an imine. The imine can be reduced by flvB to yield the 6-carboxylated pipecolate. The C-terminal alpha-KG-dependent oxygenase domain of flvA is then proposed to catalyze the decarboxylation to yield dimethylpipecolate. The polypeptide is Bifunctional enzyme flvA (Aspergillus flavus (strain ATCC 200026 / FGSC A1120 / IAM 13836 / NRRL 3357 / JCM 12722 / SRRC 167)).